The primary structure comprises 330 residues: Aspartate--ammonia ligase (330 aa).

It belongs to the class-II aminoacyl-tRNA synthetase family. AsnA subfamily.

It localises to the cytoplasm. It catalyses the reaction L-aspartate + NH4(+) + ATP = L-asparagine + AMP + diphosphate + H(+). It participates in amino-acid biosynthesis; L-asparagine biosynthesis; L-asparagine from L-aspartate (ammonia route): step 1/1. This is Aspartate--ammonia ligase from Shigella boydii serotype 18 (strain CDC 3083-94 / BS512).